Reading from the N-terminus, the 386-residue chain is Circumsporozoite protein (386 aa).

A signal peptide spans 1 to 22 (MKNFILLAVSSILLVDLFPTHC). Residues 51–304 (HVGQSASRGR…NEGANAPNEK (254 aa)) form a disordered region. The span at 72 to 100 (DAKKKKDGKKAEPKNPRENKLKQPGDRAD) shows a compositional bias: basic and acidic residues. Residues 80–88 (KKAEPKNPR) form a required for the binding to heparan sulfate proteoglycans (HSPGs) on the surface of host hepatocytes region. A region I; contains the proteolytic cleavage site region spans residues 91–95 (KLKQP). Repeat copies occupy residues 96 to 104 (GDRADGQPA), 105 to 113 (GDRADGQPA), 114 to 122 (GDRADGQPA), 123 to 131 (GDRADGQPA), 132 to 140 (GDRADGQPA), 141 to 149 (GDRAAGQPA), 150 to 158 (GDRADGQPA), 159 to 167 (GDRADGQPA), 168 to 176 (GDRAAGQPA), 177 to 185 (GDRAAGQPA), 186 to 194 (GDRADGQPA), 195 to 203 (GDRADGQPA), 204 to 212 (GDRADGQPA), 213 to 221 (GDRAAGQPA), 222 to 230 (GDRAAGQPA), 231 to 239 (GDRAAGQPA), 240 to 248 (GDRAAGQPA), 249 to 257 (GDRAAGQPA), 258 to 266 (GDRAAGQPA), and 267 to 275 (GDRAAGQPA). The interval 96-275 (GDRADGQPAG…AGDRAAGQPA (180 aa)) is 20 X 9 AA tandem repeats of G-D-R-A-[AD]-G-Q-P-A. Residues 275–292 (AGNGAGGQAAGGNAGGQG) are compositionally biased toward gly residues. The span at 293–303 (QNNEGANAPNE) shows a compositional bias: low complexity. In terms of domain architecture, TSP type-1 spans 312–364 (KVRATVGTEWTPCSVTCGVGVRVRRRVNAANKKPEDLTLNDLETDVCTMDKCA). Intrachain disulfides connect Cys324/Cys358 and Cys328/Cys363. An O-linked (Fuc) threonine glycan is attached at Thr327. Cys363 is lipidated: GPI-anchor amidated cysteine. Residues 364 to 386 (AGIFNVVSNSLGLVILLVLALFN) constitute a propeptide, removed in mature form.

This sequence belongs to the plasmodium circumsporozoite protein family. In terms of processing, during host cell invasion, proteolytically cleaved at the cell membrane in the region I by a papain-like cysteine protease of parasite origin. Cleavage is triggered by the sporozoite contact with highly sulfated heparan sulfate proteoglycans (HSPGs) present on the host hepatocyte cell surface. Cleavage exposes the TSP type-1 (TSR) domain and is required for productive invasion of host hepatocytes but not for adhesion to the host cell membrane. Cleavage is dispensable for sporozoite development in the oocyst, motility and for traversal of host and vector cells. Post-translationally, O-glycosylated; maybe by POFUT2.

It is found in the cell membrane. The protein resides in the cytoplasm. In terms of biological role, essential sporozoite protein. In the mosquito vector, required for sporozoite development in the oocyst, migration through the vector hemolymph and entry into the vector salivary glands. In the vertebrate host, required for sporozoite migration through the host dermis and infection of host hepatocytes. Binds to highly sulfated heparan sulfate proteoglycans (HSPGs) on the surface of host hepatocytes. Its function is as follows. In the vertebrate host, binds to highly sulfated heparan sulfate proteoglycans (HSPGs) on the surface of host hepatocytes and is required for sporozoite invasion of the host hepatocytes. This Plasmodium simium protein is Circumsporozoite protein.